A 582-amino-acid chain; its full sequence is 2-(3-amino-3-carboxypropyl)histidine synthase subunit 2 (582 aa).

[4Fe-4S] cluster contacts are provided by cysteine 135, cysteine 156, and cysteine 373. Positions 416-467 (SILDQPPPSSNSPGNSQEANEGPEFGDHARDEDEDAMSEPESAPPEFDLRTG) are disordered.

It belongs to the DPH1/DPH2 family. DPH2 subfamily. In terms of assembly, component of the 2-(3-amino-3-carboxypropyl)histidine synthase complex composed of dph1, dph2, dph3 and a NADH-dependent reductase, predominantly cbr1. The cofactor is [4Fe-4S] cluster.

It localises to the cytoplasm. It functions in the pathway protein modification; peptidyl-diphthamide biosynthesis. Required for the first step of diphthamide biosynthesis, a post-translational modification of histidine which occurs in elongation factor 2. Dph1 and dph2 transfer a 3-amino-3-carboxypropyl (ACP) group from S-adenosyl-L-methionine (SAM) to a histidine residue, the reaction is assisted by a reduction system comprising dph3 and a NADH-dependent reductase, predominantly cbr1. Facilitates the reduction of the catalytic iron-sulfur cluster found in the dph1 subunit. This is 2-(3-amino-3-carboxypropyl)histidine synthase subunit 2 (dph2) from Emericella nidulans (strain FGSC A4 / ATCC 38163 / CBS 112.46 / NRRL 194 / M139) (Aspergillus nidulans).